Reading from the N-terminus, the 249-residue chain is Ribonuclease 3 (249 aa).

Residues 20-149 (FKKFQERISV…FIGALYLDQG (130 aa)) enclose the RNase III domain. Glutamate 62 contributes to the Mg(2+) binding site. Residue aspartate 66 is part of the active site. Mg(2+)-binding residues include aspartate 135 and glutamate 138. Glutamate 138 is an active-site residue. The DRBM domain maps to 175 to 244 (DFKSQLQEFV…AQEALAKLQK (70 aa)). Residues 225 to 249 (RSKKEAEQHAAQEALAKLQKHHMKQ) are disordered.

Belongs to the ribonuclease III family. In terms of assembly, homodimer. Requires Mg(2+) as cofactor.

It localises to the cytoplasm. The enzyme catalyses Endonucleolytic cleavage to 5'-phosphomonoester.. Digests double-stranded RNA. Involved in the processing of primary rRNA transcript to yield the immediate precursors to the large and small rRNAs (23S and 16S). Processes some mRNAs, and tRNAs when they are encoded in the rRNA operon. Processes pre-crRNA and tracrRNA of type II CRISPR loci if present in the organism. The protein is Ribonuclease 3 of Bacillus licheniformis (strain ATCC 14580 / DSM 13 / JCM 2505 / CCUG 7422 / NBRC 12200 / NCIMB 9375 / NCTC 10341 / NRRL NRS-1264 / Gibson 46).